The primary structure comprises 246 residues: NH(3)-dependent NAD(+) synthetase (246 aa).

Residue 29–36 participates in ATP binding; the sequence is GLSGGIDS. D35 provides a ligand contact to Mg(2+). A deamido-NAD(+)-binding site is contributed by R110. An ATP-binding site is contributed by T130. Residue E135 coordinates Mg(2+). Residues K159 and S181 each contribute to the ATP site.

The protein belongs to the NAD synthetase family. As to quaternary structure, homodimer.

The enzyme catalyses deamido-NAD(+) + NH4(+) + ATP = AMP + diphosphate + NAD(+) + H(+). The protein operates within cofactor biosynthesis; NAD(+) biosynthesis; NAD(+) from deamido-NAD(+) (ammonia route): step 1/1. Its function is as follows. Catalyzes the ATP-dependent amidation of deamido-NAD to form NAD. Uses ammonia as a nitrogen source. In Campylobacter jejuni subsp. jejuni serotype O:6 (strain 81116 / NCTC 11828), this protein is NH(3)-dependent NAD(+) synthetase.